A 163-amino-acid chain; its full sequence is Periplasmic nitrate reductase, electron transfer subunit (163 aa).

The N-terminal stretch at 1–32 (MRSQDPSRRLSRRLWTLFALALCLVTGTVALA) is a signal peptide. Residues His76, Cys90, Cys93, His94, His111, Cys130, Cys133, and His134 each contribute to the heme c site.

The protein belongs to the NapB family. Component of the periplasmic nitrate reductase NapAB complex composed of NapA and NapB. Binds 2 heme C groups per subunit.

The protein localises to the periplasm. Functionally, electron transfer subunit of the periplasmic nitrate reductase complex NapAB. Receives electrons from the membrane-anchored tetraheme c-type NapC protein and transfers these to NapA subunit, thus allowing electron flow between membrane and periplasm. Essential for periplasmic nitrate reduction with nitrate as the terminal electron acceptor. This chain is Periplasmic nitrate reductase, electron transfer subunit, found in Neorhizobium galegae (Rhizobium galegae).